A 612-amino-acid polypeptide reads, in one-letter code: Zinc metalloproteinase-disintegrin-like 2a (612 aa).

The signal sequence occupies residues 1–20 (MIQVLLVTICLAVFPYQGSS). A propeptide spanning residues 21–189 (IILGSGNVND…KKASQLNLTP (169 aa)) is cleaved from the precursor. Residues 199–395 (KYIELVIVAD…NRPPCILNKP (197 aa)) form the Peptidase M12B domain. Glutamate 202 is a Ca(2+) binding site. Residue asparagine 218 is glycosylated (N-linked (GlcNAc...) asparagine). Aspartate 286 contacts Ca(2+). 3 disulfides stabilise this stretch: cysteine 310–cysteine 390, cysteine 350–cysteine 374, and cysteine 352–cysteine 357. Histidine 335 provides a ligand contact to Zn(2+). The active site involves glutamate 336. The Zn(2+) site is built by histidine 339 and histidine 345. Cysteine 390, asparagine 393, valine 405, asparagine 408, phenylalanine 410, glutamate 412, glutamate 415, and aspartate 418 together coordinate Ca(2+). The region spanning 403 to 489 (PPVCGNYFVE…DCPTDNFQRN (87 aa)) is the Disintegrin domain. Cystine bridges form between cysteine 406-cysteine 435, cysteine 417-cysteine 430, cysteine 419-cysteine 425, cysteine 429-cysteine 452, cysteine 443-cysteine 449, cysteine 448-cysteine 474, cysteine 461-cysteine 481, cysteine 468-cysteine 500, cysteine 493-cysteine 505, cysteine 512-cysteine 562, cysteine 527-cysteine 573, cysteine 540-cysteine 550, cysteine 557-cysteine 599, and cysteine 593-cysteine 605. Residues 467-469 (ECD) carry the D/ECD-tripeptide motif.

Belongs to the venom metalloproteinase (M12B) family. P-III subfamily. The cofactor is Zn(2+). In terms of tissue distribution, expressed by the venom gland.

The protein resides in the secreted. In terms of biological role, snake venom metalloproteinase that impairs hemostasis in the envenomed animal. This Crotalus adamanteus (Eastern diamondback rattlesnake) protein is Zinc metalloproteinase-disintegrin-like 2a.